We begin with the raw amino-acid sequence, 220 residues long: Thiamine-phosphate synthase (220 aa).

4-amino-2-methyl-5-(diphosphooxymethyl)pyrimidine-binding positions include 39–43 (QLRDK) and Asn80. Residues Asp81 and Asp100 each contribute to the Mg(2+) site. Ser119 is a binding site for 4-amino-2-methyl-5-(diphosphooxymethyl)pyrimidine. Residue 145 to 147 (TPT) participates in 2-[(2R,5Z)-2-carboxy-4-methylthiazol-5(2H)-ylidene]ethyl phosphate binding. Residue Lys148 participates in 4-amino-2-methyl-5-(diphosphooxymethyl)pyrimidine binding. 2-[(2R,5Z)-2-carboxy-4-methylthiazol-5(2H)-ylidene]ethyl phosphate is bound at residue Gly176.

This sequence belongs to the thiamine-phosphate synthase family. It depends on Mg(2+) as a cofactor.

It carries out the reaction 2-[(2R,5Z)-2-carboxy-4-methylthiazol-5(2H)-ylidene]ethyl phosphate + 4-amino-2-methyl-5-(diphosphooxymethyl)pyrimidine + 2 H(+) = thiamine phosphate + CO2 + diphosphate. The enzyme catalyses 2-(2-carboxy-4-methylthiazol-5-yl)ethyl phosphate + 4-amino-2-methyl-5-(diphosphooxymethyl)pyrimidine + 2 H(+) = thiamine phosphate + CO2 + diphosphate. It catalyses the reaction 4-methyl-5-(2-phosphooxyethyl)-thiazole + 4-amino-2-methyl-5-(diphosphooxymethyl)pyrimidine + H(+) = thiamine phosphate + diphosphate. The protein operates within cofactor biosynthesis; thiamine diphosphate biosynthesis; thiamine phosphate from 4-amino-2-methyl-5-diphosphomethylpyrimidine and 4-methyl-5-(2-phosphoethyl)-thiazole: step 1/1. Its function is as follows. Condenses 4-methyl-5-(beta-hydroxyethyl)thiazole monophosphate (THZ-P) and 2-methyl-4-amino-5-hydroxymethyl pyrimidine pyrophosphate (HMP-PP) to form thiamine monophosphate (TMP). The sequence is that of Thiamine-phosphate synthase from Mycobacterium marinum (strain ATCC BAA-535 / M).